A 426-amino-acid chain; its full sequence is Protein FAM124B (426 aa).

Belongs to the FAM124 family.

The protein localises to the nucleus. The polypeptide is Protein FAM124B (fam124b) (Xenopus tropicalis (Western clawed frog)).